Reading from the N-terminus, the 217-residue chain is Probable disulfide bond formation protein D (217 aa).

Positions 1–28 (MKSSNKLMALGIVFSIAVLIVIGTIVYS) are cleaved as a signal peptide. C66 and C69 form a disulfide bridge.

Belongs to the thioredoxin family. DsbA subfamily.

May be required for disulfide bond formation in some proteins. This chain is Probable disulfide bond formation protein D (bdbD), found in Bacillus anthracis.